A 1036-amino-acid chain; its full sequence is Ephrin type-A receptor 6 (1036 aa).

Positions 1–22 (MGGCEVREFLLQFGFFLPLLTA) are cleaved as a signal peptide. Topologically, residues 23 to 550 (WPGDCSHVSN…MAAEQGQILV (528 aa)) are extracellular. The region spanning 34–212 (QVVLLDTTTV…FYKKCPFTVR (179 aa)) is the Eph LBD domain. 2 consecutive Fibronectin type-III domains span residues 331–441 (PPSA…TDQD) and 442–537 (APSL…TGDE). Asn-343, Asn-397, and Asn-410 each carry an N-linked (GlcNAc...) asparagine glycan. The chain crosses the membrane as a helical span at residues 551-571 (IATAAVGGFTLLVILTLFFLI). Over 572-1036 (TGRCQWYIKA…MHIQEKGFHV (465 aa)) the chain is Cytoplasmic. Phosphotyrosine; by autocatalysis occurs at positions 606 and 612. The region spanning 631–944 (IRIERVIGAG…RNPSALHTLV (314 aa)) is the Protein kinase domain. Residues 637 to 645 (IGAGEFGEV) and Lys-663 contribute to the ATP site. Asp-798 functions as the Proton acceptor in the catalytic mechanism. Phosphotyrosine; by autocatalysis occurs at positions 831 and 978. One can recognise an SAM domain in the interval 961 to 1025 (PLFVTVGDWL…VSSIQTLRLH (65 aa)). The PDZ-binding motif lies at 1034-1036 (FHV).

This sequence belongs to the protein kinase superfamily. Tyr protein kinase family. Ephrin receptor subfamily. As to quaternary structure, heterotetramer upon binding of the ligand. The heterotetramer is composed of an ephrin dimer and a receptor dimer. Oligomerization is probably required to induce biological responses. Interacts (via SAM domain) with ANKS1A (via SAM domain). As to expression, expressed in brain and testis.

The protein resides in the membrane. It carries out the reaction L-tyrosyl-[protein] + ATP = O-phospho-L-tyrosyl-[protein] + ADP + H(+). Functionally, receptor tyrosine kinase which binds promiscuously GPI-anchored ephrin-A family ligands residing on adjacent cells, leading to contact-dependent bidirectional signaling into neighboring cells. The signaling pathway downstream of the receptor is referred to as forward signaling while the signaling pathway downstream of the ephrin ligand is referred to as reverse signaling. The polypeptide is Ephrin type-A receptor 6 (EPHA6) (Homo sapiens (Human)).